Here is a 147-residue protein sequence, read N- to C-terminus: Large ribosomal subunit protein uL23A (147 aa).

Low complexity predominate over residues 1 to 10 (MAPSAPAKTA). The interval 1–29 (MAPSAPAKTAKALDAKKKVVKGKRTTHRR) is disordered. The span at 18-29 (KVVKGKRTTHRR) shows a compositional bias: basic residues.

The protein belongs to the universal ribosomal protein uL23 family.

This protein binds to a specific region on the 26S rRNA. The chain is Large ribosomal subunit protein uL23A from Caenorhabditis elegans.